A 1364-amino-acid polypeptide reads, in one-letter code: MALFRKFFYRKPPDGLLEITERVYVFDSCFTTDVFNDDKYQDYIGDIVAQLQCHFADASFMVFNFREGESQSLLANILSSYEMVVMDYPRQYEGCPLVTIEMIHHFLRSGESWLSLSQQNVLIMHCERGGWAVLAFMLAGLLLYRKQYIGEQRTLEMIYRQAPRELIQLLSPLNPIPSQIRYLHYISRRNVSAVWPPGDRALTLDCVILRNIPGFNGEGGCRPIFRIYGKDPLLATSNTPKVLFSTPKRSKYVRLYKKVDCELIKIDIHCHIQGDVVLECISLDADQQREEMIFRVMFNTAFIRSNILMLNRDEIDILWDAKDRFPKEFRAEVLFSEMDSVNQLDSMEVGGIGEKEGLPVEAFAKVQEMFSNVDWLDPTADAAALLFQQLTSSENIQLRKGLLSPNKKDFHLSSISPTKKQSDNVEDKLSNAELSTIYVHKQENNDVQGLIPQKQATIPDEKSGSSVIHEKMISLVHEEITQVVDINTGCLSSLDMTVPSTMNSSRPVLIDQNSKLDDQFGSLQSSSPTMIMSQQFPVSRSSSVLSSDFSPRLLSACPRFHSAPSALGITALLEDHAAFGDTKNSVKVSSAVVKIPSKQSSQQHPITVTPVVTKCTPSPPPLLPPLAPVVPVPSDDQMISQEKDMSQQAQKHPDLSSFPSLSPTQQKQSTSKLCQTILPTNHQLSSSNITKEPLQISPAPTPPPLPTPSTSSSSSCHCLPPDSMLSTTTALFRPPAPPPPPLQSPSTPRCSPVRTLASPPPPPAPTSSPVRMSGPPPPPPPPAPNSCPSRPAPPPPPPPPLASTSSPPRPAAPSPCQLHTSTSSPARPVPPPPPTLSTIRSSAPTPPLLPGATSAPSPPPPPPPCSSSNQLSAPPPPPPSFSKNNGSIAPPPAPPGGNAKLPGMRGRGPAPPSGPMSRSLQSGQAASRRSNLKPLHWVKVTRAMQGSLWEESQKTDEASKPPVFDMSELEHLFSAVLPSSDGKRSDKSGSRASGSKPEKIHLIDLRRANNCGIMLTKVKMPLPDLMSAILTLDDTILDADQVENLIKFTPTKEEAELLKGYKGDKQVLGECEQFFMELMKLPRVDSKLRVFLFKIQFPSQVSDLKRSLNIVNSSAEEIRGSAKLKRIMQTILSLGNALNQGTARGSAVGFRLDSLLKLSDTRARNNKMTLMHYLSKVLSEKLPELLDFPKDLASLELAAKVQLKSLAEEMQAINKGLEKVEQELTTSENDGPVSEIFRKTLKDFLSGAEAEVRSLTSLYSNVGRNADALALYFGEDPARCPFEQVVITLQNFVRLFVRSHDENCKQLDLEKKKALKEAEAEKTKKEPENAQKTKEPGNDKAKHNNSIKELDISLQSPAQTASAK.

The region spanning 9–193 is the Phosphatase tensin-type domain; the sequence is YRKPPDGLLE…HYISRRNVSA (185 aa). Catalysis depends on cysteine 126, which acts as the Phosphocysteine intermediate. One can recognise a C2 tensin-type domain in the interval 199 to 338; it reads DRALTLDCVI…FRAEVLFSEM (140 aa). 3 disordered regions span residues 614-934, 976-999, and 1317-1364; these read KCTP…NLKP, VLPS…KPEK, and EAEA…ASAK. The span at 617 to 631 shows a compositional bias: pro residues; sequence PSPPPLLPPLAPVVP. Over residues 657–690 the composition is skewed to polar residues; it reads SFPSLSPTQQKQSTSKLCQTILPTNHQLSSSNIT. The segment covering 734–743 has biased composition (pro residues); sequence PPAPPPPPLQ. A compositionally biased stretch (low complexity) spans 744 to 757; that stretch reads SPSTPRCSPVRTLA. 2 stretches are compositionally biased toward pro residues: residues 774-813 and 856-865; these read GPPP…PAAP and PSPPPPPPPC. Polar residues predominate over residues 916–929; the sequence is MSRSLQSGQAASRR. In terms of domain architecture, FH2 spans 922–1322; it reads SGQAASRRSN…KALKEAEAEK (401 aa). The span at 1317–1351 shows a compositional bias: basic and acidic residues; sequence EAEAEKTKKEPENAQKTKEPGNDKAKHNNSIKELD. Residues 1353-1364 show a composition bias toward polar residues; that stretch reads SLQSPAQTASAK.

This sequence belongs to the formin-like family. Class-II subfamily.

The protein is Formin-like protein 6 (FH6) of Oryza sativa subsp. japonica (Rice).